A 400-amino-acid chain; its full sequence is Elongation factor Tu 1 (400 aa).

The region spanning 10 to 209 (KPHLNIGTIG…AVDSYIPLPQ (200 aa)) is the tr-type G domain. The tract at residues 19 to 26 (GHIDHGKT) is G1. 19–26 (GHIDHGKT) is a GTP binding site. T26 lines the Mg(2+) pocket. A G2 region spans residues 60-64 (GITIN). The tract at residues 81-84 (DCPG) is G3. Residues 81-85 (DCPGH) and 136-139 (NKTD) contribute to the GTP site. The segment at 136 to 139 (NKTD) is G4. Positions 174–176 (SAL) are G5.

The protein belongs to the TRAFAC class translation factor GTPase superfamily. Classic translation factor GTPase family. EF-Tu/EF-1A subfamily. Monomer.

Its subcellular location is the cytoplasm. It catalyses the reaction GTP + H2O = GDP + phosphate + H(+). Its function is as follows. GTP hydrolase that promotes the GTP-dependent binding of aminoacyl-tRNA to the A-site of ribosomes during protein biosynthesis. The sequence is that of Elongation factor Tu 1 from Syntrophomonas wolfei subsp. wolfei (strain DSM 2245B / Goettingen).